Reading from the N-terminus, the 987-residue chain is Nuclear matrix constituent protein 1b (987 aa).

Residues 1–25 (MASPRSAGGVGGGGGGGGGSGGAAA) form a disordered region. Positions 8 to 24 (GGVGGGGGGGGGSGGAA) are enriched in gly residues. 2 coiled-coil regions span residues 403 to 545 (LAEL…ERRA) and 594 to 717 (LSKI…DREA). Basic and acidic residues-rich tracts occupy residues 752–764 (SDIN…HDNS) and 898–908 (CKEHEYGDKGP). Disordered stretches follow at residues 752–775 (SDIN…FGRK) and 887–987 (HDEA…FLIT). Over residues 944 to 954 (ATVSATETSNV) the composition is skewed to polar residues. Residues 956–973 (GPEDNNDSDEEDEEEEEE) are compositionally biased toward acidic residues.

Belongs to the CRWN family. Interacts with SWI3C.

It is found in the nucleus matrix. It localises to the nucleus lamina. In terms of biological role, architectural component of nuclear structure that plays different roles in controlling nuclear size and morphology. Involved in the modification of chromatin accessibility by interacting with SWI3C, a component of the chromatin-remodeling complex, to thus reduce the suppression effect of the complex. Acts as positive regulator of drought resistance and modulates root growth. Positively regulates the expression of genes related to root growth and drought resistance. This chain is Nuclear matrix constituent protein 1b, found in Oryza sativa subsp. japonica (Rice).